The chain runs to 226 residues: Probable transaldolase (226 aa).

K91 serves as the catalytic Schiff-base intermediate with substrate.

This sequence belongs to the transaldolase family. Type 3B subfamily.

The protein resides in the cytoplasm. It catalyses the reaction D-sedoheptulose 7-phosphate + D-glyceraldehyde 3-phosphate = D-erythrose 4-phosphate + beta-D-fructose 6-phosphate. Its pathway is carbohydrate degradation; pentose phosphate pathway; D-glyceraldehyde 3-phosphate and beta-D-fructose 6-phosphate from D-ribose 5-phosphate and D-xylulose 5-phosphate (non-oxidative stage): step 2/3. In terms of biological role, transaldolase is important for the balance of metabolites in the pentose-phosphate pathway. The chain is Probable transaldolase from Chlorobium phaeobacteroides (strain DSM 266 / SMG 266 / 2430).